The following is a 787-amino-acid chain: Protein translocase subunit SecA (787 aa).

ATP is bound by residues Gln85, 103–107, and Asp492; that span reads GEGKT.

Belongs to the SecA family. As to quaternary structure, monomer and homodimer. Part of the essential Sec protein translocation apparatus which comprises SecA, SecYEG and auxiliary proteins SecDF. Other proteins may also be involved.

Its subcellular location is the cell membrane. The protein resides in the cytoplasm. The catalysed reaction is ATP + H2O + cellular proteinSide 1 = ADP + phosphate + cellular proteinSide 2.. Functionally, part of the Sec protein translocase complex. Interacts with the SecYEG preprotein conducting channel. Has a central role in coupling the hydrolysis of ATP to the transfer of proteins into and across the cell membrane, serving as an ATP-driven molecular motor driving the stepwise translocation of polypeptide chains across the membrane. The polypeptide is Protein translocase subunit SecA (Lacticaseibacillus casei (strain BL23) (Lactobacillus casei)).